Reading from the N-terminus, the 522-residue chain is L-tyrosine/L-DOPA decarboxylase 2 (522 aa).

2 consecutive repeat copies span residues Lys-75–Glu-132 and Val-135–His-186. A 2 X approximate tandem repeats region spans residues Lys-75–His-186. Residues Thr-163, Cys-164, Thr-258, and Asn-312 each coordinate pyridoxal 5'-phosphate. An N6-(pyridoxal phosphate)lysine modification is found at Lys-315.

Belongs to the group II decarboxylase family. Pyridoxal 5'-phosphate serves as cofactor. As to expression, strongly expressed in all tissues, particularly in thick roots.

It catalyses the reaction L-tyrosine + H(+) = tyramine + CO2. It carries out the reaction L-dopa + H(+) = dopamine + CO2. It functions in the pathway aromatic compound metabolism. The protein operates within alkaloid biosynthesis. Aromatic amino acid decarboxylase participating in the biosynthesis of natural products derived from phenylethylamine, including mescaline, a natural hallucinogen potentially used in psychotherapeutic treatments. Catalyzes the decarboxylation of L-tyrosine and L-DOPA. This chain is L-tyrosine/L-DOPA decarboxylase 2, found in Lophophora williamsii (Peyote).